We begin with the raw amino-acid sequence, 511 residues long: Bifunctional purine biosynthesis protein PurH (511 aa).

The 145-residue stretch at 1 to 145 folds into the MGS-like domain; that stretch reads MKKRALVSVS…KNHKFVSVIV (145 aa).

Belongs to the PurH family.

The catalysed reaction is (6R)-10-formyltetrahydrofolate + 5-amino-1-(5-phospho-beta-D-ribosyl)imidazole-4-carboxamide = 5-formamido-1-(5-phospho-D-ribosyl)imidazole-4-carboxamide + (6S)-5,6,7,8-tetrahydrofolate. The enzyme catalyses IMP + H2O = 5-formamido-1-(5-phospho-D-ribosyl)imidazole-4-carboxamide. Its pathway is purine metabolism; IMP biosynthesis via de novo pathway; 5-formamido-1-(5-phospho-D-ribosyl)imidazole-4-carboxamide from 5-amino-1-(5-phospho-D-ribosyl)imidazole-4-carboxamide (10-formyl THF route): step 1/1. It functions in the pathway purine metabolism; IMP biosynthesis via de novo pathway; IMP from 5-formamido-1-(5-phospho-D-ribosyl)imidazole-4-carboxamide: step 1/1. The sequence is that of Bifunctional purine biosynthesis protein PurH from Bacillus thuringiensis (strain Al Hakam).